Here is a 387-residue protein sequence, read N- to C-terminus: Dynactin subunit 2 (387 aa).

Coiled-coil stretches lie at residues 99–125 (LQRC…DTGR), 256–282 (SQLD…SNAT), and 355–387 (TGVQ…QMIK).

This sequence belongs to the dynactin subunit 2 family. In terms of assembly, subunit of dynactin, a multiprotein complex associated with dynein.

Its subcellular location is the cytoplasm. It is found in the cytoskeleton. It localises to the membrane. Modulates cytoplasmic dynein binding to an organelle, and plays a role in prometaphase chromosome alignment and spindle organization during mitosis. In Anopheles gambiae (African malaria mosquito), this protein is Dynactin subunit 2.